The chain runs to 167 residues: Urease accessory protein UreE (167 aa).

The tract at residues 137 to 167 is disordered; it reads ARGAYHAHGGHSHGHDHGHSHGHDHHDHSHD. Residues 149–167 show a composition bias toward basic and acidic residues; that stretch reads HGHDHGHSHGHDHHDHSHD.

The protein belongs to the UreE family.

The protein localises to the cytoplasm. Involved in urease metallocenter assembly. Binds nickel. Probably functions as a nickel donor during metallocenter assembly. This is Urease accessory protein UreE from Rhizobium rhizogenes (strain K84 / ATCC BAA-868) (Agrobacterium radiobacter).